Consider the following 341-residue polypeptide: HTH-type transcriptional repressor PurR (341 aa).

Positions 2-56 constitute an HTH lacI-type domain; sequence ATIKDVAKHAGVSTTTVSHVINKTRFVAENTKAAVWAAIKELHYSPSAVARSLKV. A DNA-binding region (H-T-H motif) is located at residues 4 to 23; the sequence is IKDVAKHAGVSTTTVSHVIN. Residues 48-56 mediate DNA binding; it reads SAVARSLKV. Hypoxanthine-binding residues include tyrosine 73, arginine 190, threonine 192, and aspartate 275.

In terms of assembly, homodimer.

Its pathway is purine metabolism; purine nucleotide biosynthesis [regulation]. In terms of biological role, is the main repressor of the genes involved in the de novo synthesis of purine nucleotides, regulating purB, purC, purEK, purF, purHD, purL, purMN and guaBA expression. PurR is allosterically activated to bind its cognate DNA by binding the purine corepressors, hypoxanthine or guanine, thereby effecting transcription repression. This chain is HTH-type transcriptional repressor PurR, found in Yersinia pestis bv. Antiqua (strain Antiqua).